A 235-amino-acid polypeptide reads, in one-letter code: MAGVSSCLKYSMFFFNFLFWVCGTLILGLAIWVRVSKDGKEIITSGDSSTNPFIAVNILIAVGSIIMVLGFLGCCGAVKESRCMLLLFFIGLLLILILQVAAGILGAAFKPEYNRILNETLYENAKLLSDNTDEAKDFQKAMIVFQSEFKCCGLENGAADWGNNFVEAKESCQCTGTDCATYQGSSVYPKTCLSLIKDLFEKNIIIVIGIAFGLAVIEILGLVFSMVLYCQIGSK.

Over 1–12 (MAGVSSCLKYSM) the chain is Cytoplasmic. A helical transmembrane segment spans residues 13-33 (FFFNFLFWVCGTLILGLAIWV). Residues 34–52 (RVSKDGKEIITSGDSSTNP) lie on the Extracellular side of the membrane. The chain crosses the membrane as a helical span at residues 53–73 (FIAVNILIAVGSIIMVLGFLG). At 74 to 84 (CCGAVKESRCM) the chain is on the cytoplasmic side. The chain crosses the membrane as a helical span at residues 85 to 105 (LLLFFIGLLLILILQVAAGIL). Over 106 to 203 (GAAFKPEYNR…SLIKDLFEKN (98 aa)) the chain is Extracellular. Residue Asn118 is glycosylated (N-linked (GlcNAc...) asparagine). Residues 204 to 224 (IIIVIGIAFGLAVIEILGLVF) traverse the membrane as a helical segment. Residues 225–235 (SMVLYCQIGSK) lie on the Cytoplasmic side of the membrane.

Belongs to the tetraspanin (TM4SF) family. Forms homooligomers. Interacts with MEP1B. Interacts with integrin alpha3/ITGA3. Interacts with RICTOR and MTOR. Interacts with ADAM17. Interacts with ECE1.

The protein resides in the cell membrane. Its function is as follows. Structural component of specialized membrane microdomains known as tetraspanin-enriched microdomains (TERMs), which act as platforms for receptor clustering and signaling. Participates thereby in diverse biological functions such as cell signal transduction, migration and protein trafficking. Promotes ADAM17-mediated TNF-alpha processing through recruitment of ADAM17 to tetraspanin-enriched micro-domains (TEMs). Forms a complex with RICTOR and integrin alpha3/ITGA3 to mediate mTORC2 activation and AKT1 phosphorylation leading to cell migration. Reduces apoptosis and autophagy induced by high glucose levels through forming a complex with mTOR and RICTOR. Contributes to the maintenance of intestinal epithelial barrier and plays a role in the regulation of intestine inflammation by switching interferon gamma receptor 1/IFNGR1 from clathrin-dependent to lipid raft-dependent endocytosis route to limit STAT1 activation magnitude and duration. Acts as a modulator of the endothelin axis by associating with endothelin converting enzyme ECE1 and regulating its activity of conversion of the endothelin-1 precursor to endothelin. This chain is Tetraspanin-8 (Tspan8), found in Mus musculus (Mouse).